The primary structure comprises 307 residues: Transmembrane protein 200B (307 aa).

The tract at residues 1-38 is disordered; sequence MTAGSPEECGEVRRSPEGRVSRLGRRLGRRRRPRSPPE. The span at 10 to 20 shows a compositional bias: basic and acidic residues; it reads GEVRRSPEGRV. Residues 22 to 34 are compositionally biased toward basic residues; it reads RLGRRLGRRRRPR. Residues 53–73 form a helical membrane-spanning segment; it reads GAFAALGALVVLVGMGIAVAG. The tract at residues 81 to 111 is disordered; that stretch reads APGSRAANASSPQMSELRREGRGGGRAHGPH. A glycan (N-linked (GlcNAc...) asparagine) is linked at Asn88. Positions 96–111 are enriched in basic and acidic residues; the sequence is ELRREGRGGGRAHGPH. A helical transmembrane segment spans residues 116 to 136; the sequence is LLGPVIMGVGLFVFICANTLL. Residues 180–211 are disordered; sequence AVGCAEPEIWDPSPRRGTSPVPSVRSLRSEPA.

Belongs to the TMEM200 family.

It is found in the membrane. This Homo sapiens (Human) protein is Transmembrane protein 200B (TMEM200B).